A 138-amino-acid polypeptide reads, in one-letter code: MNFKTSLICFALLLIGTLCSAYSNQERQRDSRRVAEIMRTSWDDNTKIKRIQELLTIYNRMAPSLRPDERARMDRFISGYTGEIMVDGVPSQGGARRIFKKILSPAAKSVATGFFTELGASLASILTSWFPANTERNH.

The N-terminal stretch at M1–A21 is a signal peptide.

This sequence belongs to the Turandot family.

The protein resides in the secreted. In terms of biological role, a humoral factor that may play a role in stress tolerance. The chain is Protein Turandot B from Drosophila melanogaster (Fruit fly).